The primary structure comprises 1408 residues: DNA-directed RNA polymerase subunit beta' (1408 aa).

Zn(2+) is bound by residues Cys70, Cys72, Cys85, and Cys88. The Mg(2+) site is built by Asp460, Asp462, and Asp464. Cys822, Cys896, Cys903, and Cys906 together coordinate Zn(2+). Positions Asp1386–Val1408 are disordered.

Belongs to the RNA polymerase beta' chain family. In terms of assembly, the RNAP catalytic core consists of 2 alpha, 1 beta, 1 beta' and 1 omega subunit. When a sigma factor is associated with the core the holoenzyme is formed, which can initiate transcription. Mg(2+) is required as a cofactor. It depends on Zn(2+) as a cofactor.

It catalyses the reaction RNA(n) + a ribonucleoside 5'-triphosphate = RNA(n+1) + diphosphate. In terms of biological role, DNA-dependent RNA polymerase catalyzes the transcription of DNA into RNA using the four ribonucleoside triphosphates as substrates. The protein is DNA-directed RNA polymerase subunit beta' of Nitrosospira multiformis (strain ATCC 25196 / NCIMB 11849 / C 71).